We begin with the raw amino-acid sequence, 429 residues long: Enolase (429 aa).

A (2R)-2-phosphoglycerate-binding site is contributed by glutamine 162. Glutamate 204 acts as the Proton donor in catalysis. Mg(2+) contacts are provided by aspartate 241, glutamate 288, and aspartate 315. (2R)-2-phosphoglycerate is bound by residues lysine 340, arginine 369, serine 370, and lysine 391. Catalysis depends on lysine 340, which acts as the Proton acceptor.

It belongs to the enolase family. The cofactor is Mg(2+).

It localises to the cytoplasm. It is found in the secreted. Its subcellular location is the cell surface. It catalyses the reaction (2R)-2-phosphoglycerate = phosphoenolpyruvate + H2O. It participates in carbohydrate degradation; glycolysis; pyruvate from D-glyceraldehyde 3-phosphate: step 4/5. Its function is as follows. Catalyzes the reversible conversion of 2-phosphoglycerate (2-PG) into phosphoenolpyruvate (PEP). It is essential for the degradation of carbohydrates via glycolysis. The chain is Enolase from Christiangramia forsetii (strain DSM 17595 / CGMCC 1.15422 / KT0803) (Gramella forsetii).